Reading from the N-terminus, the 129-residue chain is Small ribosomal subunit protein uS9 (129 aa).

It belongs to the universal ribosomal protein uS9 family.

In Pelodictyon phaeoclathratiforme (strain DSM 5477 / BU-1), this protein is Small ribosomal subunit protein uS9.